Here is an 80-residue protein sequence, read N- to C-terminus: Metallothionein-like protein type 2, MT2-4/MT2-25 (80 aa).

The protein belongs to the metallothionein superfamily. Type 15 family.

Its function is as follows. Metallothioneins have a high content of cysteine residues that bind various heavy metals. The protein is Metallothionein-like protein type 2, MT2-4/MT2-25 of Brassica juncea (Indian mustard).